We begin with the raw amino-acid sequence, 340 residues long: GTPase Obg (340 aa).

The region spanning 1-159 (MDFIDEVKLY…KYVVLKLKVL (159 aa)) is the Obg domain. Residues 160 to 329 (SDVGIIGMPN…LNEKLKKGSS (170 aa)) enclose the OBG-type G domain. Residues 166–173 (GMPNAGKS), 191–195 (FTTIK), 212–215 (DIPG), 279–282 (NKCD), and 310–312 (GED) contribute to the GTP site. Mg(2+)-binding residues include S173 and T193.

It belongs to the TRAFAC class OBG-HflX-like GTPase superfamily. OBG GTPase family. In terms of assembly, monomer. It depends on Mg(2+) as a cofactor.

It is found in the cytoplasm. In terms of biological role, an essential GTPase which binds GTP, GDP and possibly (p)ppGpp with moderate affinity, with high nucleotide exchange rates and a fairly low GTP hydrolysis rate. Plays a role in control of the cell cycle, stress response, ribosome biogenesis and in those bacteria that undergo differentiation, in morphogenesis control. The sequence is that of GTPase Obg from Wolbachia sp. subsp. Brugia malayi (strain TRS).